We begin with the raw amino-acid sequence, 622 residues long: Probable potassium transport system protein Kup (622 aa).

Helical transmembrane passes span 8 to 28 (LAALTLGAIGVVYGDIGTSVL), 50 to 70 (VLSVLFWTLTVIVSLKYVVLV), 100 to 120 (GWLLGLGIFGTSLFYGDGVIT), 137 to 157 (PHFGKAVIPLTLVVLFGLFAV), 169 to 189 (FGPVTLVWFFTIAALGVPHIV), 203 to 223 (ALGFILGNPGISFIILGAVVL), 247 to 267 (WFSVAMPALTINYFGQGALLL), 285 to 305 (ALVPLVVLATMATVIASQALI), 337 to 357 (IYLPFVNWSLFVAIVLAVVMF), 366 to 386 (AYGIAVTLDMLITTVLTFFVI), 392 to 412 (YPLALCVATTGFFFVVDLAFF), and 419 to 439 (LLQGGWFPLMIGGLVFTLMMT).

This sequence belongs to the HAK/KUP transporter (TC 2.A.72) family.

It is found in the cell inner membrane. It carries out the reaction K(+)(in) + H(+)(in) = K(+)(out) + H(+)(out). Functionally, transport of potassium into the cell. Likely operates as a K(+):H(+) symporter. The chain is Probable potassium transport system protein Kup from Acidovorax ebreus (strain TPSY) (Diaphorobacter sp. (strain TPSY)).